The following is a 360-amino-acid chain: Phospho-N-acetylmuramoyl-pentapeptide-transferase (360 aa).

A run of 10 helical transmembrane segments spans residues 21 to 41, 74 to 94, 97 to 117, 134 to 154, 168 to 188, 199 to 219, 236 to 256, 263 to 283, 288 to 308, and 338 to 358; these read YVTF…LWWG, MGGL…GDLG, YVWV…IDDY, YILQ…SAGS, VMPQ…VGSS, GLAI…AYLS, SGEL…FLWF, VFMG…IAVL, ILLV…ILQV, and VIVR…ATLK.

Belongs to the glycosyltransferase 4 family. MraY subfamily. It depends on Mg(2+) as a cofactor.

Its subcellular location is the cell inner membrane. It carries out the reaction UDP-N-acetyl-alpha-D-muramoyl-L-alanyl-gamma-D-glutamyl-meso-2,6-diaminopimeloyl-D-alanyl-D-alanine + di-trans,octa-cis-undecaprenyl phosphate = di-trans,octa-cis-undecaprenyl diphospho-N-acetyl-alpha-D-muramoyl-L-alanyl-D-glutamyl-meso-2,6-diaminopimeloyl-D-alanyl-D-alanine + UMP. The protein operates within cell wall biogenesis; peptidoglycan biosynthesis. Catalyzes the initial step of the lipid cycle reactions in the biosynthesis of the cell wall peptidoglycan: transfers peptidoglycan precursor phospho-MurNAc-pentapeptide from UDP-MurNAc-pentapeptide onto the lipid carrier undecaprenyl phosphate, yielding undecaprenyl-pyrophosphoryl-MurNAc-pentapeptide, known as lipid I. This Shewanella loihica (strain ATCC BAA-1088 / PV-4) protein is Phospho-N-acetylmuramoyl-pentapeptide-transferase.